The following is a 158-amino-acid chain: Large ribosomal subunit protein uL15 (158 aa).

This sequence belongs to the universal ribosomal protein uL15 family. Part of the 50S ribosomal subunit.

Binds to the 23S rRNA. The protein is Large ribosomal subunit protein uL15 of Aeropyrum pernix (strain ATCC 700893 / DSM 11879 / JCM 9820 / NBRC 100138 / K1).